A 319-amino-acid polypeptide reads, in one-letter code: ATP-dependent 6-phosphofructokinase (319 aa).

Residue G11 participates in ATP binding. 21–25 provides a ligand contact to ADP; sequence RAVTR. Residues 72-73 and 102-105 contribute to the ATP site; these read RF and GDGS. Mg(2+) is bound at residue D103. Substrate is bound at residue 125–127; that stretch reads SID. The active-site Proton acceptor is the D127. R154 serves as a coordination point for ADP. Substrate contacts are provided by residues R162 and 169–171; that span reads MGR. Residues 185 to 187 and 213 to 215 contribute to the ADP site; these read GAD and KKH. Substrate is bound by residues E222, R243, and 249 to 252; that span reads HMQR.

This sequence belongs to the phosphofructokinase type A (PFKA) family. ATP-dependent PFK group I subfamily. Prokaryotic clade 'B1' sub-subfamily. Homotetramer. The cofactor is Mg(2+).

It localises to the cytoplasm. The catalysed reaction is beta-D-fructose 6-phosphate + ATP = beta-D-fructose 1,6-bisphosphate + ADP + H(+). It participates in carbohydrate degradation; glycolysis; D-glyceraldehyde 3-phosphate and glycerone phosphate from D-glucose: step 3/4. With respect to regulation, allosterically activated by ADP and other diphosphonucleosides, and allosterically inhibited by phosphoenolpyruvate. Functionally, catalyzes the phosphorylation of D-fructose 6-phosphate to fructose 1,6-bisphosphate by ATP, the first committing step of glycolysis. This chain is ATP-dependent 6-phosphofructokinase, found in Lactobacillus johnsonii (strain CNCM I-12250 / La1 / NCC 533).